The primary structure comprises 154 residues: Ribosome maturation factor RimP (154 aa).

It belongs to the RimP family.

Its subcellular location is the cytoplasm. In terms of biological role, required for maturation of 30S ribosomal subunits. This chain is Ribosome maturation factor RimP, found in Salmonella agona (strain SL483).